The following is a 100-amino-acid chain: Urease subunit gamma (100 aa).

Belongs to the urease gamma subunit family. As to quaternary structure, heterotrimer of UreA (gamma), UreB (beta) and UreC (alpha) subunits. Three heterotrimers associate to form the active enzyme.

Its subcellular location is the cytoplasm. It carries out the reaction urea + 2 H2O + H(+) = hydrogencarbonate + 2 NH4(+). It functions in the pathway nitrogen metabolism; urea degradation; CO(2) and NH(3) from urea (urease route): step 1/1. This chain is Urease subunit gamma, found in Parasynechococcus marenigrum (strain WH8102).